The following is a 293-amino-acid chain: NAD-dependent protein deacetylase (293 aa).

Residues Met-1 to Thr-284 form the Deacetylase sirtuin-type domain. Residues Gly-27–Lys-47 and Gln-105–Asp-108 contribute to the NAD(+) site. His-123 serves as the catalytic Proton acceptor. Zn(2+) contacts are provided by Cys-131, Cys-134, Cys-182, and Cys-185. Residues Gly-222–Ser-224, Asn-248–Gly-250, and Cys-266 contribute to the NAD(+) site.

It belongs to the sirtuin family. Class II subfamily. Zn(2+) is required as a cofactor.

Its subcellular location is the cytoplasm. It carries out the reaction N(6)-acetyl-L-lysyl-[protein] + NAD(+) + H2O = 2''-O-acetyl-ADP-D-ribose + nicotinamide + L-lysyl-[protein]. Functionally, NAD-dependent protein deacetylase which modulates the activities of several enzymes which are inactive in their acetylated form. In Xanthomonas campestris pv. campestris (strain B100), this protein is NAD-dependent protein deacetylase.